A 180-amino-acid polypeptide reads, in one-letter code: O-acetyl-ADP-ribose deacetylase (180 aa).

The 175-residue stretch at 1-175 (MKPQIEVVVG…LYQRLLIQRG (175 aa)) folds into the Macro domain. Substrate-binding positions include 11-12 (DI), Asn25, 33-35 (GVD), and 122-126 (STGVY). Asp35 functions as the Proton acceptor in the catalytic mechanism.

It belongs to the MacroD-type family. YmdB subfamily. Homodimer. Interacts with RNase III.

It catalyses the reaction 3''-O-acetyl-ADP-D-ribose + H2O = ADP-D-ribose + acetate + H(+). It carries out the reaction 2''-O-acetyl-ADP-D-ribose + H2O = ADP-D-ribose + acetate + H(+). Deacetylates O-acetyl-ADP ribose to yield ADP-ribose and free acetate. Down-regulates ribonuclease 3 (RNase III) activity. Acts by interacting directly with the region of the ribonuclease that is required for dimerization/activation. The polypeptide is O-acetyl-ADP-ribose deacetylase (Enterobacter sp. (strain 638)).